Consider the following 430-residue polypeptide: Major capsid protein (430 aa).

A binding to the capsid assembly scaffolding protein region spans residues alanine 2–proline 56. Residues serine 223–valine 345 form an i domain region.

It belongs to the P22 phage major capsid protein family. As to quaternary structure, interacts (via N-terminus) with the capsid assembly scaffolding protein (via C-terminus); capsid proteins and scaffolding proteins form building blocks that assemble to form the procapsid. Interacts with the portal protein.

The protein resides in the virion. Functionally, self-assembles to form an icosahedral capsid with a T=7 symmetry. In Salmonella phage P22 (Bacteriophage P22), this protein is Major capsid protein (5).